Here is an 886-residue protein sequence, read N- to C-terminus: MTSQLIKKIVTGDEIRNAFLKFYSEKLHKIIPSASLIPDDPTVMLTIAGMLPFKPVFLGLKERPSKRATSSQKCIRTNDIENVGVTARHHTFFEMLGNFSFGDYFKREAIQWAWELVTNIYQLSVENIIVSVFHEDEESAKIWSDEIGIHPDRIVKLGEEDNFWSSGKTGPCGPCSELYYDFHPEKGLQNIDLEDGDRFIEFYNLVFMQYNRDPNGKLTDLKFKNIDTGMGLERMAQILQKKQNNYETDLIFPIIQKICEIANIDYFSSDDKNKISLKIIGDHTRAVIHLISDGVSASNLGRGYILRRLIRRMVRHGRLLGITNEFLPHIASVGINLMQNNYPDLKNNNDLILNEIKIEEIRFRETLERGEKLLDELISSGQKLISGFKAFELYDTYGFPLELTVEIAEEHSISVDVKGFEEEMNVQKERAKAASSNIDLTLEGSLEREIDVFNKTVFNGYKSLLSEAEIKGIFLDSTLVKEASEGQKVLIVLDQTTFYGESGGQVGDIGTIFSNDVEVLVDNVMRKKNVFLHYGTIKKGKLTIGQKVKTNVSSSNRAKAAANHTATHLLQSALKSVINESVGQKGSLVAFNKLRFDFNSSNPISKDQISKIETLVNSWIMENHSLEIKNMSKSEALEKGAVAMFGEKYDDEVRVVNVPGVSMELCGGTHVKTTSELGSFKIISEEGISAGVRRIEALSGQSALDYFSDRNALVNQLSDLLKANPNQLFERVNNLQAELINKNKEIQKMKDEIAYFKYSSIKSSAEIVNSFSILVNQIDGLDGNSLQSAALNLTSHLGNKAIVILGGIPNPENRKLLFVVSLGDDAVKIGLHAGKLINEIARICSGGGGGKPNFAQAGAKDIDKLSDALDYAKNYLQKTLASHSDK.

His564, His568, Cys666, and His670 together coordinate Zn(2+).

Belongs to the class-II aminoacyl-tRNA synthetase family. It depends on Zn(2+) as a cofactor.

The protein resides in the cytoplasm. It catalyses the reaction tRNA(Ala) + L-alanine + ATP = L-alanyl-tRNA(Ala) + AMP + diphosphate. Its function is as follows. Catalyzes the attachment of alanine to tRNA(Ala) in a two-step reaction: alanine is first activated by ATP to form Ala-AMP and then transferred to the acceptor end of tRNA(Ala). Also edits incorrectly charged Ser-tRNA(Ala) and Gly-tRNA(Ala) via its editing domain. In Prochlorococcus marinus (strain AS9601), this protein is Alanine--tRNA ligase.